The sequence spans 133 residues: Small ribosomal subunit protein uS11 (133 aa).

It belongs to the universal ribosomal protein uS11 family. In terms of assembly, part of the 30S ribosomal subunit. Interacts with proteins S7 and S18. Binds to IF-3.

Functionally, located on the platform of the 30S subunit, it bridges several disparate RNA helices of the 16S rRNA. Forms part of the Shine-Dalgarno cleft in the 70S ribosome. This chain is Small ribosomal subunit protein uS11, found in Christiangramia forsetii (strain DSM 17595 / CGMCC 1.15422 / KT0803) (Gramella forsetii).